Here is a 520-residue protein sequence, read N- to C-terminus: GMP synthase [glutamine-hydrolyzing] (520 aa).

Residues 12 to 205 (KIIVLDYGSQ…AISICGARGD (194 aa)) form the Glutamine amidotransferase type-1 domain. Cys89 serves as the catalytic Nucleophile. Catalysis depends on residues His179 and Glu181. The GMPS ATP-PPase domain maps to 206-395 (WSMDNFIDME…LGMPEEIVWR (190 aa)). Residue 233-239 (SGGVDSS) coordinates ATP.

As to quaternary structure, homodimer.

It catalyses the reaction XMP + L-glutamine + ATP + H2O = GMP + L-glutamate + AMP + diphosphate + 2 H(+). It functions in the pathway purine metabolism; GMP biosynthesis; GMP from XMP (L-Gln route): step 1/1. In terms of biological role, catalyzes the synthesis of GMP from XMP. This Streptococcus pyogenes serotype M5 (strain Manfredo) protein is GMP synthase [glutamine-hydrolyzing].